Consider the following 113-residue polypeptide: Large ribosomal subunit protein bL17 (113 aa).

It belongs to the bacterial ribosomal protein bL17 family. As to quaternary structure, part of the 50S ribosomal subunit. Contacts protein L32.

This Clostridium tetani (strain Massachusetts / E88) protein is Large ribosomal subunit protein bL17.